A 130-amino-acid polypeptide reads, in one-letter code: Keratin, high-sulfur matrix protein, IIIA3A (130 aa).

As to expression, wool.

The keratin products of mammalian epidermal derivatives such as wool and hair consist of microfibrils embedded in a rigid matrix of other proteins. The matrix proteins include the high-sulfur and high-tyrosine keratins, having molecular weights of 6-20 kDa, whereas the microfibrils contain the larger, low-sulfur keratins (40-56 kDa). The sequence is that of Keratin, high-sulfur matrix protein, IIIA3A from Ovis aries (Sheep).